Here is a 78-residue protein sequence, read N- to C-terminus: Large ribosomal subunit protein bL28 (78 aa).

The segment at 1 to 31 (MAAHCQVTGAEPGFGHSISHSHRRNKRRFDP) is disordered.

The protein belongs to the bacterial ribosomal protein bL28 family.

This Paenarthrobacter aurescens (strain TC1) protein is Large ribosomal subunit protein bL28.